A 304-amino-acid polypeptide reads, in one-letter code: tRNA pseudouridine synthase A (304 aa).

D65 serves as the catalytic Nucleophile. Y123 contacts substrate. A disordered region spans residues H274–H304. Residues L289 to H298 are compositionally biased toward basic and acidic residues.

It belongs to the tRNA pseudouridine synthase TruA family. Homodimer.

It catalyses the reaction uridine(38/39/40) in tRNA = pseudouridine(38/39/40) in tRNA. Its function is as follows. Formation of pseudouridine at positions 38, 39 and 40 in the anticodon stem and loop of transfer RNAs. In Gloeobacter violaceus (strain ATCC 29082 / PCC 7421), this protein is tRNA pseudouridine synthase A.